We begin with the raw amino-acid sequence, 312 residues long: Olfactory receptor 13J1 (312 aa).

Residues 1–25 are Extracellular-facing; that stretch reads MEPLNRTEVSEFFLKGFSGYPALEH. N-linked (GlcNAc...) asparagine glycosylation occurs at Asn5. Residues 26-46 form a helical membrane-spanning segment; the sequence is LLFPLCSAMYLVTLLGNTAIM. Topologically, residues 47–54 are cytoplasmic; sequence AVSVLDIH. A helical membrane pass occupies residues 55–75; sequence LHTPVYFFLGNLSTLDICYTP. Topologically, residues 76-99 are extracellular; that stretch reads TFVPLMLVHLLSSRKTISFAVCAI. An intrachain disulfide couples Cys97 to Cys189. Residues 100 to 120 form a helical membrane-spanning segment; that stretch reads QMCLSLSTGSTECLLLAITAY. At 121 to 139 the chain is on the cytoplasmic side; it reads DRYLAICQPLRYHVLMSHR. A helical transmembrane segment spans residues 140-160; it reads LCVLLMGAAWVLCLLKSVTEM. Residues 161-197 are Extracellular-facing; the sequence is VISMRLPFCGHHVVSHFTCKILAVLKLACGNTSVSED. Asn191 carries an N-linked (GlcNAc...) asparagine glycan. Residues 198–217 form a helical membrane-spanning segment; sequence FLLAGSILLLPVPLAFICLS. Topologically, residues 218 to 237 are cytoplasmic; that stretch reads YLLILATILRVPSAARCCKA. The helical transmembrane segment at 238–258 threads the bilayer; that stretch reads FSTCLAHLAVVLLFYGTIIFM. The Extracellular portion of the chain corresponds to 259-271; sequence YLKPKSKEAHISD. Residues 272-292 form a helical membrane-spanning segment; the sequence is EVFTVLYAMVTTMLNPTIYSL. Topologically, residues 293 to 312 are cytoplasmic; sequence RNKEVKEAARKVWGRSRASR.

This sequence belongs to the G-protein coupled receptor 1 family.

It localises to the cell membrane. Functionally, odorant receptor. The polypeptide is Olfactory receptor 13J1 (OR13J1) (Homo sapiens (Human)).